Consider the following 408-residue polypeptide: MSAIKFNPSSFRKNFKWFENNKNWINFDNAATSIALDVVAEASKEYYQYFCVNPHNKNPEINQKLIAIIEETRDLLAKFFNAKKNEIIFTSSATESLNLFAFGLSSLVKSNDEIILKEDEHAANVFPWVNLAKENKAKLKIIKKTPNKSWTDAFLKACTPSTKLLVITATSNLFGNSIDYEKISKHLKKISPNSFIVVDAVQAVPHHKIDITSANIDFLTFSTHKFYGPTGLGIAFIKSELQSRLKPFKLGGDIFKSLDNNFKIIFKEGPSKFEAGTLNIMAIYALNKQLKFMQKEFNFSEMVFYSKQLKNLAYQLLSQNPNIVLANHDQDVPIFAFKHKYINSADLATFLNIKKIIVRQGSICVGKFKNKESFLRVSLLHYNTKEELLYLEKLLKTSKNSIINELIY.

N6-(pyridoxal phosphate)lysine is present on Lys225.

This sequence belongs to the class-V pyridoxal-phosphate-dependent aminotransferase family. Csd subfamily. The cofactor is pyridoxal 5'-phosphate.

The enzyme catalyses (sulfur carrier)-H + L-cysteine = (sulfur carrier)-SH + L-alanine. Catalyzes the removal of elemental sulfur and selenium atoms from L-cysteine, L-cystine, L-selenocysteine, and L-selenocystine to produce L-alanine. The protein is Probable cysteine desulfurase (csd) of Mycoplasma genitalium (strain ATCC 33530 / DSM 19775 / NCTC 10195 / G37) (Mycoplasmoides genitalium).